The sequence spans 1006 residues: 5'-3' exoribonuclease 2 (1006 aa).

Coiled-coil stretches lie at residues 256–287 (FAQD…NSEQ) and 453–544 (RLKK…AESE). Residues 492–529 (DDAVSKANKTNFNLAEVMKQKIINKKHRLEKDNEEEEI) are required for retention in the nucleus. Over residues 561–575 (DRENSETTEVSRDSP) the composition is skewed to basic and acidic residues. Disordered stretches follow at residues 561 to 584 (DREN…NVSE) and 939 to 1006 (HNYG…ANRR). The residue at position 574 (serine 574) is a Phosphoserine. Residues 939–956 (HNYGRNSYNSQPGFNNSR) show a composition bias toward polar residues. 6 consecutive repeat copies span residues 955 to 958 (SRYD), 961 to 964 (NNNY), 972 to 974 (NNN), 975 to 978 (YSGN), 984 to 986 (YSG), and 996 to 999 (SRYD). Residues 955 to 999 (SRYDGGNNNYRQNSNYRNNNYSGNRNSGQYSGNSYSRNNKQSRYD) form a 2 X 4 AA repeats of S-R-Y-D, N-N-N-Y, Y-S-G-N region. Positions 959 to 993 (GGNNNYRQNSNYRNNNYSGNRNSGQYSGNSYSRNN) are enriched in low complexity. A compositionally biased stretch (basic and acidic residues) spans 996–1006 (SRYDNSRANRR).

Belongs to the 5'-3' exonuclease family. XRN2/RAT1 subfamily. As to quaternary structure, interacts with RAI1 and RTT103. Mg(2+) serves as cofactor. The cofactor is Mn(2+).

Its subcellular location is the nucleus. With respect to regulation, inhibited by nucleoside 3', 5'-bisphosphates. Functionally, possesses 5'-&gt;3' exoribonuclease activity. Required for the processing of nuclear mRNA, rRNA and small nucleolar RNA (snoRNA) precursors. May promote termination of transcription by RNA polymerase II via the recruitment of 3'-end processing factors to the poly(A) site and by the degradation of nascent RNA downstream of the poly(A) site. In Saccharomyces cerevisiae (strain ATCC 204508 / S288c) (Baker's yeast), this protein is 5'-3' exoribonuclease 2 (RAT1).